We begin with the raw amino-acid sequence, 347 residues long: Secretory carrier-associated membrane protein 3 (347 aa).

The interval 1 to 88 is disordered; sequence MAQSRDGGNP…EPKNYGSYST (88 aa). The Cytoplasmic portion of the chain corresponds to 1–170; that stretch reads MAQSRDGGNP…QKTVSTMYYL (170 aa). The residue at position 32 (Ser-32) is a Phosphoserine. Thr-37 is modified (phosphothreonine). Phosphotyrosine is present on residues Tyr-41 and Tyr-53. Pro residues predominate over residues 49 to 66; sequence PPPAYEPPAPAPLPPPSA. Ser-72 and Ser-76 each carry phosphoserine. Phosphotyrosine is present on Tyr-83. At Ser-85 the chain carries Phosphoserine. The next 4 membrane-spanning stretches (helical) occupy residues 171-191, 197-217, 247-267, and 277-297; these read WMCS…SFCV, AGFG…FVCW, FVLQ…SALV, and VLML…IVML. Over 298–347 the chain is Cytoplasmic; it reads KRIHSLYRRTGASFQKAQQEFAAGVFSNPAVRTAAANAAAGAAENAFRAP. A Glycyl lysine isopeptide (Lys-Gly) (interchain with G-Cter in SUMO1) cross-link involves residue Lys-313.

The protein belongs to the SCAMP family. As to quaternary structure, interacts with NEDD4, NEDD4L and TSG101. Interacts with RNF126. In terms of processing, monoubiquitinated. Widely expressed, with highest expression in heart and skeletal muscle.

The protein localises to the membrane. In terms of biological role, functions in post-Golgi recycling pathways. Acts as a recycling carrier to the cell surface. The protein is Secretory carrier-associated membrane protein 3 (SCAMP3) of Homo sapiens (Human).